A 275-amino-acid chain; its full sequence is Transcription factor Ovo-like 2 (275 aa).

A disordered region spans residues 15–101 (SVRSWDELPD…GHLATKQRPV (87 aa)). Composition is skewed to basic and acidic residues over residues 18 to 29 (SWDELPDEKRAD) and 39 to 49 (LLHDPPEDCRS). Residues 56-76 (GSGSSSAGEPGGAESSSSPHA) show a composition bias toward low complexity. The span at 80–89 (ETPEPGDAEG) shows a compositional bias: acidic residues. C2H2-type zinc fingers lie at residues 119–141 (HSCDLCGKGFRLQRMLNRHLKCH), 147–169 (HLCTFCGKGFNDTFDLKRHVRTH), 175–198 (YKCNVCNKAFTQRCSLESHLKKIH), and 214–237 (YVCEDCGYTGPTQEDLYLHVNSAH). Ser269 is subject to Phosphoserine.

It belongs to the krueppel C2H2-type zinc-finger protein family. Interacts (via zinc-finger domains) with CEBPA (via bZIP domain); the interaction inhibits the transcription factor activity of CEBPA and is required to repress adipogenesis. As to expression, expressed in testis, ovary, heart and skeletal muscle. Expressed in the cornea, but absent from the corneal endothelium.

The protein resides in the nucleus. Its function is as follows. Zinc-finger transcription repressor factor. Plays a critical role in maintaining the identity of epithelial lineages by suppressing epithelial-to mesenchymal transition (EMT) mainly through the repression of ZEB1, an EMT inducer. Positively regulates neuronal differentiation. Suppresses cell cycling and terminal differentiation of keratinocytes by directly repressing MYC and NOTCH1. Important for the correct development of primordial germ cells in embryos. Plays dual functions in thermogenesis and adipogenesis to maintain energy balance. Essential for brown/beige adipose tissue-mediated thermogenesis, is necessary for the development of brown adipocytes. In white adipose tissues, limits adipogenesis by blocking CEBPA binding to its transcriptional targets and inhibiting its transcription factor activity. This Homo sapiens (Human) protein is Transcription factor Ovo-like 2.